The following is a 104-amino-acid chain: Protein U9 (104 aa).

This is Protein U9 (U9) from Homo sapiens (Human).